A 396-amino-acid polypeptide reads, in one-letter code: Digeranylgeranylglycerophospholipid reductase 2 (396 aa).

Residues Ala13, Glu32, Cys43, Ala44, Gly46, Arg92, Ala116, Asp278, Gly290, and Leu291 each contribute to the FAD site.

The protein belongs to the geranylgeranyl reductase family. DGGGPL reductase subfamily. FAD is required as a cofactor.

It carries out the reaction a 2,3-bis-O-phytanyl-sn-glycerol 1-phospholipid + 8 A = a 2,3-bis-O-(geranylgeranyl)-sn-glycerol 1-phospholipid + 8 AH2. The enzyme catalyses 2,3-bis-O-(phytanyl)-sn-glycerol 1-phosphate + 8 A = 2,3-bis-O-(geranylgeranyl)-sn-glycerol 1-phosphate + 8 AH2. The catalysed reaction is CDP-2,3-bis-O-(geranylgeranyl)-sn-glycerol + 8 AH2 = CDP-2,3-bis-O-(phytanyl)-sn-glycerol + 8 A. It catalyses the reaction archaetidylserine + 8 AH2 = 2,3-bis-O-phytanyl-sn-glycero-3-phospho-L-serine + 8 A. The protein operates within membrane lipid metabolism; glycerophospholipid metabolism. Is involved in the reduction of 2,3-digeranylgeranylglycerophospholipids (unsaturated archaeols) into 2,3-diphytanylglycerophospholipids (saturated archaeols) in the biosynthesis of archaeal membrane lipids. Catalyzes the formation of archaetidic acid (2,3-di-O-phytanyl-sn-glyceryl phosphate) from 2,3-di-O-geranylgeranylglyceryl phosphate (DGGGP) via the hydrogenation of each double bond of the isoprenoid chains. Is also probably able to reduce double bonds of geranyl groups in CDP-2,3-bis-O-(geranylgeranyl)-sn-glycerol and archaetidylserine, thus acting at various stages in the biosynthesis of archaeal membrane lipids. This chain is Digeranylgeranylglycerophospholipid reductase 2, found in Methanopyrus kandleri (strain AV19 / DSM 6324 / JCM 9639 / NBRC 100938).